The following is a 182-amino-acid chain: Alpha-S2-casein (182 aa).

Positions 1–15 are cleaved as a signal peptide; the sequence is MKFFIFTCLLAVALA. A phosphoserine mark is found at S22, S23, and S24.

It belongs to the alpha-casein family. As to expression, mammary gland specific. Secreted in milk.

It localises to the secreted. Important role in the capacity of milk to transport calcium phosphate. This chain is Alpha-S2-casein (CSN1S2), found in Oryctolagus cuniculus (Rabbit).